The following is a 286-amino-acid chain: Pantothenate synthetase (286 aa).

30 to 37 (MGCFHQGH) is a binding site for ATP. H37 functions as the Proton donor in the catalytic mechanism. A (R)-pantoate-binding site is contributed by Q61. Residue Q61 participates in beta-alanine binding. 147–150 (GEKD) lines the ATP pocket. Q153 contributes to the (R)-pantoate binding site. 184 to 187 (MSSR) is a binding site for ATP.

The protein belongs to the pantothenate synthetase family. As to quaternary structure, homodimer.

It localises to the cytoplasm. The enzyme catalyses (R)-pantoate + beta-alanine + ATP = (R)-pantothenate + AMP + diphosphate + H(+). It participates in cofactor biosynthesis; (R)-pantothenate biosynthesis; (R)-pantothenate from (R)-pantoate and beta-alanine: step 1/1. In terms of biological role, catalyzes the condensation of pantoate with beta-alanine in an ATP-dependent reaction via a pantoyl-adenylate intermediate. The polypeptide is Pantothenate synthetase (Desulfotalea psychrophila (strain LSv54 / DSM 12343)).